Consider the following 82-residue polypeptide: EMBRYO SURROUNDING FACTOR 1-like protein 10 (82 aa).

An N-terminal signal peptide occupies residues 1-22 (MSSLYFAILCLFMIFLVPLHEF). 4 cysteine pairs are disulfide-bonded: C39–C55, C44–C74, C53–C70, and C56–C63.

This sequence belongs to the MEG family. In terms of tissue distribution, expressed in stems, leaves and flowers.

The sequence is that of EMBRYO SURROUNDING FACTOR 1-like protein 10 (ESFL10) from Arabidopsis thaliana (Mouse-ear cress).